Reading from the N-terminus, the 383-residue chain is Protein delta homolog 1 (383 aa).

Residues 1-23 form the signal peptide; sequence MTATEALLRVLLLLLAFGHSTYG. EGF-like domains follow at residues 24–55, 53–86, 88–125, 127–168, 170–206, and 208–245; these read AECFPACNPQNGFCEDDNVCRCQPGWQGPLCD, LCDQCVTSPGCLHGLCGEPGQCICTDGWDGELCD, DVRACSSAPCANNRTCVSLDDGLYECSCAPGYSGKDCQ, KDGP…NFCE, VANSCTPNPCENDGVCTDIGGDFRCRCPAGFIDKTCS, and PVTNCASSPCQNGGTCLQHTQVSYECLCKPEFTGLTCV. Over 24–303 the chain is Extracellular; it reads AECFPACNPQ…KKTPLLTEGQ (280 aa). Cystine bridges form between cysteine 26-cysteine 37, cysteine 30-cysteine 43, cysteine 45-cysteine 54, cysteine 57-cysteine 68, cysteine 63-cysteine 74, cysteine 76-cysteine 85, cysteine 92-cysteine 103, cysteine 97-cysteine 113, cysteine 115-cysteine 124, cysteine 131-cysteine 144, cysteine 138-cysteine 156, and cysteine 158-cysteine 167. A glycan (O-linked (GalNAc...) serine) is linked at serine 94. N-linked (GlcNAc...) asparagine glycosylation is present at asparagine 100. O-linked (GalNAc...) threonine glycosylation is present at threonine 143. Residue serine 163 is glycosylated (O-linked (GalNAc...) serine; partial). Residues asparagine 165 and asparagine 172 are each glycosylated (N-linked (GlcNAc...) asparagine; atypical; partial). Cystine bridges form between cysteine 174/cysteine 185, cysteine 179/cysteine 194, cysteine 196/cysteine 205, cysteine 212/cysteine 223, cysteine 217/cysteine 233, and cysteine 235/cysteine 244. Serine 214 carries an O-linked (GalNAc...) serine glycan. Threonine 222 carries O-linked (GalNAc...) threonine; partial glycosylation. Serine 251 carries O-linked (GalNAc...) serine; partial glycosylation. O-linked (GalNAc...) threonine glycosylation is present at threonine 256. A glycan (O-linked (GalNAc...) serine; partial) is linked at serine 260. Residues 304–327 traverse the membrane as a helical segment; that stretch reads AICFTILGVLTSLVVLGTVGIVFL. Residues 328-383 lie on the Cytoplasmic side of the membrane; that stretch reads NKCETWVSNLRYNHMLRKKKNLLLQYNSGEDLAVNIIFPEKIDMTTFSKEAGDEEI.

In terms of assembly, monomer. Interacts with SH3RF2. N- and O-glycosylated. O-glycosylated with core 1 or possibly core 8 glycans. Found within the stromal cells in close contact to the vascular structure of placental villi, yolk sac, fetal liver, adrenal cortex and pancreas and in the beta cells of the islets of Langerhans in the adult pancreas. Found also in some forms of neuroendocrine lung tumor tissue.

Its subcellular location is the membrane. The protein localises to the cytoplasm. In terms of biological role, may have a role in neuroendocrine differentiation. The sequence is that of Protein delta homolog 1 (DLK1) from Homo sapiens (Human).